We begin with the raw amino-acid sequence, 189 residues long: Probable pericyclase scpY (189 aa).

The protein belongs to the pericyclase pydY family.

It functions in the pathway mycotoxin biosynthesis. Its function is as follows. Probable pericyclase; part of the gene scp cluster that mediates the biosynthesis of a hirsutellone-like compound that has still to be identified. The protein is Probable pericyclase scpY of Mollisia scopiformis (Conifer needle endophyte fungus).